The following is a 207-amino-acid chain: LexA repressor (207 aa).

Residues 28–48 constitute a DNA-binding region (H-T-H motif); the sequence is RAEIAQKLGFKSANAAEEHLK. Active-site for autocatalytic cleavage activity residues include Ser-124 and Lys-161.

This sequence belongs to the peptidase S24 family. Homodimer.

It carries out the reaction Hydrolysis of Ala-|-Gly bond in repressor LexA.. Its function is as follows. Represses a number of genes involved in the response to DNA damage (SOS response), including recA and lexA. In the presence of single-stranded DNA, RecA interacts with LexA causing an autocatalytic cleavage which disrupts the DNA-binding part of LexA, leading to derepression of the SOS regulon and eventually DNA repair. The sequence is that of LexA repressor from Aeromonas hydrophila subsp. hydrophila (strain ATCC 7966 / DSM 30187 / BCRC 13018 / CCUG 14551 / JCM 1027 / KCTC 2358 / NCIMB 9240 / NCTC 8049).